A 309-amino-acid chain; its full sequence is MTTPRWRLILNGKSAGNDELRDAVGHWRGQGVQLEVRVTWEDGDAERYVAEAIDHGVDVIVAAGGDGTLSAVAETLAHREELADALPSLALIPMGTANDFATAAGIPTEPKEAFALIGQATPHAIDLLRVDADGTQWWCANLASGGFGTQVTVETDAGLKKMLGGLAYVITGIAKLGRIEPITARLSGPDFAWEGDFIALGIGNGRQAGGGQQLCPQALIDDGLLDVTVLPELEGEVTATLGQMLKSGTQAALEQLATRARLPWLEIASERPLTLNLDGEPVQARQFRIECVPGRVRMHLPAGCPLLGG.

The region spanning 1–134 (MTTPRWRLIL…IDLLRVDADG (134 aa)) is the DAGKc domain. ATP is bound by residues Thr-39, 65 to 71 (GDGTLSA), and Thr-96. Mg(2+) contacts are provided by Leu-219, Asp-222, and Leu-224. The active-site Proton acceptor is Glu-280.

The protein belongs to the diacylglycerol/lipid kinase family. YegS lipid kinase subfamily. Mg(2+) is required as a cofactor. Requires Ca(2+) as cofactor.

Its subcellular location is the cytoplasm. Functionally, probably phosphorylates lipids; the in vivo substrate is unknown. This chain is Probable lipid kinase YegS-like, found in Stenotrophomonas maltophilia (strain K279a).